Reading from the N-terminus, the 179-residue chain is Large ribosomal subunit protein uL5 (179 aa).

The protein belongs to the universal ribosomal protein uL5 family. Part of the 50S ribosomal subunit; part of the 5S rRNA/L5/L18/L25 subcomplex. Contacts the 5S rRNA and the P site tRNA. Forms a bridge to the 30S subunit in the 70S ribosome.

Functionally, this is one of the proteins that bind and probably mediate the attachment of the 5S RNA into the large ribosomal subunit, where it forms part of the central protuberance. In the 70S ribosome it contacts protein S13 of the 30S subunit (bridge B1b), connecting the 2 subunits; this bridge is implicated in subunit movement. Contacts the P site tRNA; the 5S rRNA and some of its associated proteins might help stabilize positioning of ribosome-bound tRNAs. This chain is Large ribosomal subunit protein uL5, found in Buchnera aphidicola subsp. Baizongia pistaciae (strain Bp).